Reading from the N-terminus, the 734-residue chain is Photosystem I P700 chlorophyll a apoprotein A2 (734 aa).

The next 8 membrane-spanning stretches (helical) occupy residues 46–69 (IFASHFGQLAIIFLWTSGNLFHVA), 135–158 (LYIGALFLMFCSALFLIAGRLHLQ), 175–199 (LNHHLSGLFGVSSLAWTGHLVHVAL), 273–291 (IAHHHLAIALVFLIAGHMY), 330–353 (LHFQLGLALASLGVVTSLVAQHMY), 369–395 (AALYTHHQYIAGFIMTGAFAHGAIFFI), 417–439 (AIISHLSWASLFLGFHTLGLYVH), and 517–535 (FLVHHAIALGLHTTTLILV). The [4Fe-4S] cluster site is built by cysteine 559 and cysteine 568. 2 helical membrane passes run 575–596 (AFYLAVFWMLNTVGWVTFYWHW) and 643–665 (LSVWAWMFLFGHLVWATGFMFLI). Histidine 654, methionine 662, and tyrosine 670 together coordinate chlorophyll a. Tryptophan 671 provides a ligand contact to phylloquinone. A helical membrane pass occupies residues 707–727 (LVGLVHFSVGYIFTYAAFLIA).

This sequence belongs to the PsaA/PsaB family. In terms of assembly, the PsaA/B heterodimer binds the P700 chlorophyll special pair and subsequent electron acceptors. PSI consists of a core antenna complex that captures photons, and an electron transfer chain that converts photonic excitation into a charge separation. The eukaryotic PSI reaction center is composed of at least 11 subunits. P700 is a chlorophyll a/chlorophyll a' dimer, A0 is one or more chlorophyll a, A1 is one or both phylloquinones and FX is a shared 4Fe-4S iron-sulfur center. is required as a cofactor.

Its subcellular location is the plastid. The protein localises to the chloroplast thylakoid membrane. The enzyme catalyses reduced [plastocyanin] + hnu + oxidized [2Fe-2S]-[ferredoxin] = oxidized [plastocyanin] + reduced [2Fe-2S]-[ferredoxin]. In terms of biological role, psaA and PsaB bind P700, the primary electron donor of photosystem I (PSI), as well as the electron acceptors A0, A1 and FX. PSI is a plastocyanin-ferredoxin oxidoreductase, converting photonic excitation into a charge separation, which transfers an electron from the donor P700 chlorophyll pair to the spectroscopically characterized acceptors A0, A1, FX, FA and FB in turn. Oxidized P700 is reduced on the lumenal side of the thylakoid membrane by plastocyanin. The chain is Photosystem I P700 chlorophyll a apoprotein A2 from Gnetum parvifolium (Small-leaved jointfir).